The following is a 426-amino-acid chain: Histidine--tRNA ligase (426 aa).

This sequence belongs to the class-II aminoacyl-tRNA synthetase family. Homodimer.

The protein resides in the cytoplasm. The catalysed reaction is tRNA(His) + L-histidine + ATP = L-histidyl-tRNA(His) + AMP + diphosphate + H(+). This chain is Histidine--tRNA ligase, found in Streptococcus equi subsp. equi (strain 4047).